A 696-amino-acid polypeptide reads, in one-letter code: DNA ligase (696 aa).

NAD(+)-binding positions include 55 to 59, 105 to 106, and Glu137; these read DYEFD and SL. Catalysis depends on Lys139, which acts as the N6-AMP-lysine intermediate. Residues Arg160, Glu194, Lys310, and Lys334 each coordinate NAD(+). Residues Cys428, Cys431, Cys446, and Cys451 each coordinate Zn(2+). One can recognise a BRCT domain in the interval 615–696; sequence NVNPNFVGKN…EFIELKDKFD (82 aa).

Belongs to the NAD-dependent DNA ligase family. LigA subfamily. Requires Mg(2+) as cofactor. It depends on Mn(2+) as a cofactor.

It catalyses the reaction NAD(+) + (deoxyribonucleotide)n-3'-hydroxyl + 5'-phospho-(deoxyribonucleotide)m = (deoxyribonucleotide)n+m + AMP + beta-nicotinamide D-nucleotide.. Functionally, DNA ligase that catalyzes the formation of phosphodiester linkages between 5'-phosphoryl and 3'-hydroxyl groups in double-stranded DNA using NAD as a coenzyme and as the energy source for the reaction. It is essential for DNA replication and repair of damaged DNA. This is DNA ligase from Fusobacterium nucleatum subsp. nucleatum (strain ATCC 25586 / DSM 15643 / BCRC 10681 / CIP 101130 / JCM 8532 / KCTC 2640 / LMG 13131 / VPI 4355).